A 322-amino-acid chain; its full sequence is Extracellular metalloprotease AFUA_1G07730 (322 aa).

The N-terminal stretch at 1-22 (MLPFNSCVYVLLIISLMSNCRA) is a signal peptide. Asparagine 123 and asparagine 197 each carry an N-linked (GlcNAc...) asparagine glycan. Histidine 233 is a binding site for Zn(2+). Residue glutamate 234 is part of the active site. Histidine 237 contacts Zn(2+). Cysteine 272 and cysteine 299 are oxidised to a cystine.

The protein belongs to the peptidase M43B family.

It localises to the secreted. In terms of biological role, secreted metalloproteinase that allows assimilation of proteinaceous substrates. Plays a pivotal role as a pathogenicity determinant during infections and contributes to the ability of the pathogen to persist within the mammalian host. This Aspergillus fumigatus (strain ATCC MYA-4609 / CBS 101355 / FGSC A1100 / Af293) (Neosartorya fumigata) protein is Extracellular metalloprotease AFUA_1G07730.